The following is a 513-amino-acid chain: uncharacterized protein (513 aa).

The interval 1-48 is disordered; sequence MGSSEEQSVPGDDFYEESGDLNTGLSLVLRPAKSNEGESSLSSPKGSK. A compositionally biased stretch (polar residues) spans 37-48; that stretch reads GESSLSSPKGSK. Phosphoserine is present on residues Ser-43, Ser-84, and Ser-123. Disordered regions lie at residues 210 to 229, 236 to 287, 390 to 414, and 453 to 481; these read DGNHGNQAKNSGPAETGDLA, TRDS…GSKS, AKEDTDSTRDPSSQVQFPTHRAEPP, and SVLSGDQEEPVGLPAPDSEILQLPGTQGC.

This is an uncharacterized protein from Mus musculus (Mouse).